A 241-amino-acid polypeptide reads, in one-letter code: Zinc finger CCHC domain-containing protein 24 (241 aa).

2 positions are modified to phosphoserine: S65 and S93. The segment at 132–149 (YLCHLCFNKGHYIKDCPQ) adopts a CCHC-type zinc-finger fold.

This Macaca fascicularis (Crab-eating macaque) protein is Zinc finger CCHC domain-containing protein 24 (ZCCHC24).